Here is a 336-residue protein sequence, read N- to C-terminus: 3-isopropylmalate dehydrogenase (336 aa).

The substrate site is built by R87, R97, R121, and D211. The Mg(2+) site is built by D211, D235, and D239. G271–D283 is a binding site for NAD(+).

Belongs to the isocitrate and isopropylmalate dehydrogenases family. LeuB type 2 subfamily. As to quaternary structure, homodimer. Requires Mg(2+) as cofactor. Mn(2+) serves as cofactor.

It localises to the cytoplasm. The enzyme catalyses (2R,3S)-3-isopropylmalate + NAD(+) = 4-methyl-2-oxopentanoate + CO2 + NADH. Its pathway is amino-acid biosynthesis; L-leucine biosynthesis; L-leucine from 3-methyl-2-oxobutanoate: step 3/4. Functionally, catalyzes the oxidation of 3-carboxy-2-hydroxy-4-methylpentanoate (3-isopropylmalate) to 3-carboxy-4-methyl-2-oxopentanoate. The product decarboxylates to 4-methyl-2 oxopentanoate. The chain is 3-isopropylmalate dehydrogenase from Rhodococcus opacus (strain B4).